The primary structure comprises 179 residues: Large ribosomal subunit protein uL5 (179 aa).

This sequence belongs to the universal ribosomal protein uL5 family. In terms of assembly, part of the 50S ribosomal subunit; part of the 5S rRNA/L5/L18/L25 subcomplex. Contacts the 5S rRNA and the P site tRNA. Forms a bridge to the 30S subunit in the 70S ribosome.

Its function is as follows. This is one of the proteins that bind and probably mediate the attachment of the 5S RNA into the large ribosomal subunit, where it forms part of the central protuberance. In the 70S ribosome it contacts protein S13 of the 30S subunit (bridge B1b), connecting the 2 subunits; this bridge is implicated in subunit movement. Contacts the P site tRNA; the 5S rRNA and some of its associated proteins might help stabilize positioning of ribosome-bound tRNAs. The chain is Large ribosomal subunit protein uL5 from Desulfovibrio desulfuricans (strain ATCC 27774 / DSM 6949 / MB).